Here is a 673-residue protein sequence, read N- to C-terminus: Paralemmin-3 (673 aa).

2 coiled-coil regions span residues 4–49 (SSLY…LRER) and 75–101 (GQAQARIRNLEDSLFTLQSQLQLLQSA). Disordered stretches follow at residues 49–78 (RWLMDGAAAVPEPSEDPTSKDPQSPEGQAQ) and 99–213 (QSAS…GEAK). Residues 123 to 137 (LSQSIVEAGSVGQTD) show a composition bias toward polar residues. Residues S124 and S143 each carry the phosphoserine modification. T151 bears the Phosphothreonine mark. S155, S157, and S260 each carry phosphoserine. Disordered stretches follow at residues 295-343 (VPEV…SFIW) and 356-673 (LLVE…CAVM). T301 bears the Phosphothreonine mark. Phosphoserine is present on S325. Over residues 327-338 (EGDGQGGSGGEE) the composition is skewed to gly residues. A phosphoserine mark is found at S375 and S420. Composition is skewed to basic and acidic residues over residues 392-477 (EAEK…KRGA) and 487-532 (GVEK…EKTQ). Residues S544 and S660 each carry the phosphoserine modification. 2 S-palmitoyl cysteine lipidation sites follow: C667 and C669. Residue C670 is modified to Cysteine methyl ester. Residue C670 is the site of S-farnesyl cysteine attachment. A propeptide spans 671-673 (AVM) (removed in mature form).

This sequence belongs to the paralemmin family. As to quaternary structure, interacts with SIGIRR. Post-translationally, palmitoylated on Cys-667 and Cys-669 and prenylated on Cys-670; which is required for membrane association.

The protein resides in the cytoplasm. It is found in the cell membrane. In terms of biological role, ATP-binding protein, which may act as a adapter in the Toll-like receptor (TLR) signaling. The polypeptide is Paralemmin-3 (PALM3) (Homo sapiens (Human)).